The sequence spans 399 residues: All trans-polyprenyl-diphosphate synthase PDSS2 (399 aa).

It belongs to the FPP/GGPP synthase family. In terms of assembly, heterotetramer composed of 2 PDSS1/DPS1 and 2 PDSS2/DLP1 subunits.

The protein localises to the mitochondrion. The enzyme catalyses 7 isopentenyl diphosphate + (2E,6E)-farnesyl diphosphate = all-trans-decaprenyl diphosphate + 7 diphosphate. It catalyses the reaction 6 isopentenyl diphosphate + (2E,6E)-farnesyl diphosphate = all-trans-nonaprenyl diphosphate + 6 diphosphate. It participates in cofactor biosynthesis; ubiquinone biosynthesis. Functionally, heterotetrameric enzyme that catalyzes the condensation of farnesyl diphosphate (FPP), which acts as a primer, and isopentenyl diphosphate (IPP) to produce prenyl diphosphates of varying chain lengths and participates in the determination of the side chain of ubiquinone. Supplies nona and decaprenyl diphosphate, the precursors for the side chain of the isoprenoid quinones ubiquinone-9 (Q9) and ubiquinone-10 (Q10) respectively. The enzyme adds isopentenyl diphosphate molecules sequentially to farnesyl diphosphate with trans stereochemistry. May play a role during cerebellar development. May regulate mitochondrial respiratory chain function. The polypeptide is All trans-polyprenyl-diphosphate synthase PDSS2 (Homo sapiens (Human)).